A 311-amino-acid chain; its full sequence is Methionyl-tRNA formyltransferase (311 aa).

110-113 (SLLP) contributes to the (6S)-5,6,7,8-tetrahydrofolate binding site.

This sequence belongs to the Fmt family.

The enzyme catalyses L-methionyl-tRNA(fMet) + (6R)-10-formyltetrahydrofolate = N-formyl-L-methionyl-tRNA(fMet) + (6S)-5,6,7,8-tetrahydrofolate + H(+). Attaches a formyl group to the free amino group of methionyl-tRNA(fMet). The formyl group appears to play a dual role in the initiator identity of N-formylmethionyl-tRNA by promoting its recognition by IF2 and preventing the misappropriation of this tRNA by the elongation apparatus. The polypeptide is Methionyl-tRNA formyltransferase (Streptococcus pyogenes serotype M12 (strain MGAS2096)).